The chain runs to 181 residues: ATP-dependent protease subunit HslV (181 aa).

Thr-6 is an active-site residue. Na(+) contacts are provided by Gly-162, Cys-165, and Thr-168.

Belongs to the peptidase T1B family. HslV subfamily. A double ring-shaped homohexamer of HslV is capped on each side by a ring-shaped HslU homohexamer. The assembly of the HslU/HslV complex is dependent on binding of ATP.

It localises to the cytoplasm. The catalysed reaction is ATP-dependent cleavage of peptide bonds with broad specificity.. With respect to regulation, allosterically activated by HslU binding. Protease subunit of a proteasome-like degradation complex believed to be a general protein degrading machinery. The protein is ATP-dependent protease subunit HslV of Nitratidesulfovibrio vulgaris (strain ATCC 29579 / DSM 644 / CCUG 34227 / NCIMB 8303 / VKM B-1760 / Hildenborough) (Desulfovibrio vulgaris).